The sequence spans 81 residues: Sulfur carrier protein TusA (81 aa).

Catalysis depends on Cys-19, which acts as the Cysteine persulfide intermediate.

This sequence belongs to the sulfur carrier protein TusA family. As to quaternary structure, interacts with IscS.

Its subcellular location is the cytoplasm. It functions in the pathway tRNA modification. In terms of biological role, sulfur carrier protein involved in sulfur trafficking in the cell. Part of a sulfur-relay system required for 2-thiolation during synthesis of 2-thiouridine of the modified wobble base 5-methylaminomethyl-2-thiouridine (mnm(5)s(2)U) in tRNA. Interacts with IscS and stimulates its cysteine desulfurase activity. Accepts an activated sulfur from IscS, which is then transferred to TusD, and thus determines the direction of sulfur flow from IscS to 2-thiouridine formation. Also appears to be involved in sulfur transfer for the biosynthesis of molybdopterin. This chain is Sulfur carrier protein TusA, found in Enterobacter sp. (strain 638).